We begin with the raw amino-acid sequence, 495 residues long: GTPase Der (495 aa).

EngA-type G domains are found at residues Pro-3–Glu-166 and Ile-208–Thr-381. Residues Gly-9–Ser-16, Asp-56–Ile-60, Asn-118–Asp-121, Gly-214–Ser-221, Asp-261–Val-265, and Asn-326–Asp-329 each bind GTP. The 85-residue stretch at Lys-382–Glu-466 folds into the KH-like domain.

This sequence belongs to the TRAFAC class TrmE-Era-EngA-EngB-Septin-like GTPase superfamily. EngA (Der) GTPase family. In terms of assembly, associates with the 50S ribosomal subunit.

Functionally, GTPase that plays an essential role in the late steps of ribosome biogenesis. The chain is GTPase Der from Yersinia pseudotuberculosis serotype IB (strain PB1/+).